Consider the following 102-residue polypeptide: Urease subunit beta (102 aa).

It belongs to the urease beta subunit family. Heterotrimer of UreA (gamma), UreB (beta) and UreC (alpha) subunits. Three heterotrimers associate to form the active enzyme.

Its subcellular location is the cytoplasm. It carries out the reaction urea + 2 H2O + H(+) = hydrogencarbonate + 2 NH4(+). It functions in the pathway nitrogen metabolism; urea degradation; CO(2) and NH(3) from urea (urease route): step 1/1. This is Urease subunit beta from Methylobacillus flagellatus (strain ATCC 51484 / DSM 6875 / VKM B-1610 / KT).